The primary structure comprises 314 residues: 3'-5' exoribonuclease YhaM (314 aa).

Residues serine 22–valine 90 constitute a DNA-binding region (OB). The HD domain maps to histidine 163–lysine 279.

It belongs to the YhaM family. Mn(2+) is required as a cofactor. Requires Co(2+) as cofactor.

Its function is as follows. Shows a 3'-5' exoribonuclease activity as well as single-stranded DNA 3'-5'exonuclease activity. Plays a role in the secondary pathway of 23S rRNA 3' end maturation. The protein is 3'-5' exoribonuclease YhaM of Bacillus subtilis (strain 168).